We begin with the raw amino-acid sequence, 264 residues long: MKPYLDLLQHVLEHGAEKSDRTGTGTRSVFGWQMRFDLNDGFPLVTTKKLHLRSIIHELLWFLQGDTNIGYLSDNQVRIWDEWADDNGDLGPVYGKQWRRWTGPDGVEIDQMQWLVDEIKRNPDSRRLVISAWNVGELPQMALMPCHSLFQFYVVNGKLSCQLYQRSGDIFLGVPFNIASYALLTHMVAQATGLGVGDFVHTLGDAHLYSNHFDQARKQLTRTPRALPTLRLNPEVTDLFAFRFEDIAIEGYDPHPAIKAPVAV.

R21 provides a ligand contact to dUMP. H51 is a binding site for (6R)-5,10-methylene-5,6,7,8-tetrahydrofolate. Position 126-127 (126-127 (RR)) interacts with dUMP. The Nucleophile role is filled by C146. DUMP-binding positions include 166–169 (RSGD), N177, and 207–209 (HLY). Residue D169 participates in (6R)-5,10-methylene-5,6,7,8-tetrahydrofolate binding. A263 is a binding site for (6R)-5,10-methylene-5,6,7,8-tetrahydrofolate.

This sequence belongs to the thymidylate synthase family. Bacterial-type ThyA subfamily. Homodimer.

Its subcellular location is the cytoplasm. The enzyme catalyses dUMP + (6R)-5,10-methylene-5,6,7,8-tetrahydrofolate = 7,8-dihydrofolate + dTMP. The protein operates within pyrimidine metabolism; dTTP biosynthesis. Its function is as follows. Catalyzes the reductive methylation of 2'-deoxyuridine-5'-monophosphate (dUMP) to 2'-deoxythymidine-5'-monophosphate (dTMP) while utilizing 5,10-methylenetetrahydrofolate (mTHF) as the methyl donor and reductant in the reaction, yielding dihydrofolate (DHF) as a by-product. This enzymatic reaction provides an intracellular de novo source of dTMP, an essential precursor for DNA biosynthesis. The protein is Thymidylate synthase of Xanthomonas oryzae pv. oryzae (strain MAFF 311018).